Here is a 1372-residue protein sequence, read N- to C-terminus: DNA-directed RNA polymerase subunit beta (1372 aa).

It belongs to the RNA polymerase beta chain family. The RNAP catalytic core consists of 2 alpha, 1 beta, 1 beta' and 1 omega subunit. When a sigma factor is associated with the core the holoenzyme is formed, which can initiate transcription.

It carries out the reaction RNA(n) + a ribonucleoside 5'-triphosphate = RNA(n+1) + diphosphate. Functionally, DNA-dependent RNA polymerase catalyzes the transcription of DNA into RNA using the four ribonucleoside triphosphates as substrates. The chain is DNA-directed RNA polymerase subunit beta from Psychrobacter sp. (strain PRwf-1).